A 426-amino-acid polypeptide reads, in one-letter code: Glutamate-1-semialdehyde 2,1-aminomutase (426 aa).

An N6-(pyridoxal phosphate)lysine modification is found at Lys265.

This sequence belongs to the class-III pyridoxal-phosphate-dependent aminotransferase family. HemL subfamily. In terms of assembly, homodimer. Requires pyridoxal 5'-phosphate as cofactor.

It localises to the cytoplasm. The catalysed reaction is (S)-4-amino-5-oxopentanoate = 5-aminolevulinate. The protein operates within porphyrin-containing compound metabolism; protoporphyrin-IX biosynthesis; 5-aminolevulinate from L-glutamyl-tRNA(Glu): step 2/2. This Hahella chejuensis (strain KCTC 2396) protein is Glutamate-1-semialdehyde 2,1-aminomutase.